The sequence spans 453 residues: Bifunctional protein GlmU (453 aa).

A pyrophosphorylase region spans residues 1–226; the sequence is MVAVAILAAG…YLEITGINDR (226 aa). UDP-N-acetyl-alpha-D-glucosamine-binding positions include 7 to 10, lysine 21, glutamine 73, and 78 to 79; these read LAAG and GT. Aspartate 103 is a binding site for Mg(2+). UDP-N-acetyl-alpha-D-glucosamine contacts are provided by glycine 140, glutamate 155, asparagine 170, and asparagine 224. Asparagine 224 is a Mg(2+) binding site. A linker region spans residues 227–247; sequence KQLAMANGILQNRVKDHWMAQ. An N-acetyltransferase region spans residues 248 to 453; the sequence is GVTLIDPDSI…EWKKTIESKK (206 aa). Residues arginine 329 and lysine 347 each coordinate UDP-N-acetyl-alpha-D-glucosamine. Catalysis depends on histidine 359, which acts as the Proton acceptor. UDP-N-acetyl-alpha-D-glucosamine is bound by residues tyrosine 362 and asparagine 373. Acetyl-CoA is bound by residues alanine 376, 382 to 383, alanine 419, and arginine 436; that span reads NY.

The protein in the N-terminal section; belongs to the N-acetylglucosamine-1-phosphate uridyltransferase family. In the C-terminal section; belongs to the transferase hexapeptide repeat family. As to quaternary structure, homotrimer. Requires Mg(2+) as cofactor.

It localises to the cytoplasm. The catalysed reaction is alpha-D-glucosamine 1-phosphate + acetyl-CoA = N-acetyl-alpha-D-glucosamine 1-phosphate + CoA + H(+). The enzyme catalyses N-acetyl-alpha-D-glucosamine 1-phosphate + UTP + H(+) = UDP-N-acetyl-alpha-D-glucosamine + diphosphate. Its pathway is nucleotide-sugar biosynthesis; UDP-N-acetyl-alpha-D-glucosamine biosynthesis; N-acetyl-alpha-D-glucosamine 1-phosphate from alpha-D-glucosamine 6-phosphate (route II): step 2/2. It participates in nucleotide-sugar biosynthesis; UDP-N-acetyl-alpha-D-glucosamine biosynthesis; UDP-N-acetyl-alpha-D-glucosamine from N-acetyl-alpha-D-glucosamine 1-phosphate: step 1/1. The protein operates within bacterial outer membrane biogenesis; LPS lipid A biosynthesis. Functionally, catalyzes the last two sequential reactions in the de novo biosynthetic pathway for UDP-N-acetylglucosamine (UDP-GlcNAc). The C-terminal domain catalyzes the transfer of acetyl group from acetyl coenzyme A to glucosamine-1-phosphate (GlcN-1-P) to produce N-acetylglucosamine-1-phosphate (GlcNAc-1-P), which is converted into UDP-GlcNAc by the transfer of uridine 5-monophosphate (from uridine 5-triphosphate), a reaction catalyzed by the N-terminal domain. In Rippkaea orientalis (strain PCC 8801 / RF-1) (Cyanothece sp. (strain PCC 8801)), this protein is Bifunctional protein GlmU.